The sequence spans 183 residues: Putative 3-methyladenine DNA glycosylase (183 aa).

The protein belongs to the DNA glycosylase MPG family.

This Rickettsia africae (strain ESF-5) protein is Putative 3-methyladenine DNA glycosylase.